A 185-amino-acid chain; its full sequence is Tetratricopeptide repeat protein 36 homolog (185 aa).

3 TPR repeats span residues 53–86 (SREL…AQRA), 88–119 (VLNN…ANDQ), and 125–158 (CHAH…GSKF).

Belongs to the TTC36 family.

This Drosophila melanogaster (Fruit fly) protein is Tetratricopeptide repeat protein 36 homolog.